A 257-amino-acid polypeptide reads, in one-letter code: 3-methyl-2-oxobutanoate hydroxymethyltransferase (257 aa).

Mg(2+)-binding residues include aspartate 42 and aspartate 86. 3-methyl-2-oxobutanoate contacts are provided by residues aspartate 42–serine 43, aspartate 86, and lysine 116. A Mg(2+)-binding site is contributed by glutamate 118. The active-site Proton acceptor is the glutamate 185.

Belongs to the PanB family. As to quaternary structure, homodecamer; pentamer of dimers. Mg(2+) serves as cofactor.

The protein localises to the cytoplasm. The catalysed reaction is 3-methyl-2-oxobutanoate + (6R)-5,10-methylene-5,6,7,8-tetrahydrofolate + H2O = 2-dehydropantoate + (6S)-5,6,7,8-tetrahydrofolate. Its pathway is cofactor biosynthesis; (R)-pantothenate biosynthesis; (R)-pantoate from 3-methyl-2-oxobutanoate: step 1/2. Its function is as follows. Catalyzes the reversible reaction in which hydroxymethyl group from 5,10-methylenetetrahydrofolate is transferred onto alpha-ketoisovalerate to form ketopantoate. The polypeptide is 3-methyl-2-oxobutanoate hydroxymethyltransferase (Prochlorococcus marinus subsp. pastoris (strain CCMP1986 / NIES-2087 / MED4)).